Reading from the N-terminus, the 1070-residue chain is DNA-directed RNA polymerase subunit beta (1070 aa).

Belongs to the RNA polymerase beta chain family. As to quaternary structure, in plastids the minimal PEP RNA polymerase catalytic core is composed of four subunits: alpha, beta, beta', and beta''. When a (nuclear-encoded) sigma factor is associated with the core the holoenzyme is formed, which can initiate transcription.

It localises to the plastid. The protein resides in the chloroplast. It catalyses the reaction RNA(n) + a ribonucleoside 5'-triphosphate = RNA(n+1) + diphosphate. In terms of biological role, DNA-dependent RNA polymerase catalyzes the transcription of DNA into RNA using the four ribonucleoside triphosphates as substrates. This chain is DNA-directed RNA polymerase subunit beta, found in Populus trichocarpa (Western balsam poplar).